The following is a 487-amino-acid chain: N-succinylglutamate 5-semialdehyde dehydrogenase (487 aa).

Positions 1 to 23 (MTHFIKGQWQAGKGHDVTSSNPA) are disordered. An NAD(+)-binding site is contributed by 220–225 (GSSRTG). Residues glutamate 243 and cysteine 277 contribute to the active site.

Belongs to the aldehyde dehydrogenase family. AstD subfamily.

The catalysed reaction is N-succinyl-L-glutamate 5-semialdehyde + NAD(+) + H2O = N-succinyl-L-glutamate + NADH + 2 H(+). Its pathway is amino-acid degradation; L-arginine degradation via AST pathway; L-glutamate and succinate from L-arginine: step 4/5. Functionally, catalyzes the NAD-dependent reduction of succinylglutamate semialdehyde into succinylglutamate. The chain is N-succinylglutamate 5-semialdehyde dehydrogenase from Shewanella sp. (strain ANA-3).